The chain runs to 570 residues: Putative ABC transporter ATP-binding protein SACOL2708 (570 aa).

ABC transporter domains lie at Ile-6–Glu-247 and Leu-304–Arg-537. Residues Gly-40–Ser-47 and Gly-338–Ser-345 contribute to the ATP site.

It belongs to the ABC transporter superfamily.

The protein localises to the cell membrane. In terms of biological role, probably part of an ABC transporter complex. Responsible for energy coupling to the transport system. In Staphylococcus aureus (strain COL), this protein is Putative ABC transporter ATP-binding protein SACOL2708.